Consider the following 382-residue polypeptide: MRPGTALQAVLLAVLLVGLRAATGRLLSASDLDLRGGQPVCRGGTQRPCYKVIYFHDTSRRLNFEEAKEACRRDGGQLVSIESEDEQKLIEKFIENLLPSDGDFWIGLRRREEKQSNSTACQDLYAWTDGSISQFRNWYVDEPSCGSEVCVVMYHQPSAPAGIGGPYMFQWNDDRCNMKNNFICKYSDEKPAVPSREAEGEETELTTPVLPEETQEEDAKKTFKESREAALNLAYILIPSIPLLLLLVVTTVVCWVWICRKRKREQPDPSTKKQHTIWPSPHQGNSPDLEVYNVIRKQSEADLAETRPDLKNISFRVCSGEATPDDMSCDYDNMAVNPSESGFVTLVSVESGFVTNDIYEFSPDQMGRSKESGWVENEIYGY.

An N-terminal signal peptide occupies residues 1 to 21 (MRPGTALQAVLLAVLLVGLRA). Residues 22–235 (ATGRLLSASD…SREAALNLAY (214 aa)) are Extracellular-facing. The 141-residue stretch at 45–185 (TQRPCYKVIY…CNMKNNFICK (141 aa)) folds into the C-type lectin domain. Disulfide bonds link Cys-71–Cys-184 and Cys-150–Cys-176. N-linked (GlcNAc...) asparagine glycosylation occurs at Asn-117. Residues 236 to 256 (ILIPSIPLLLLLVVTTVVCWV) form a helical membrane-spanning segment. Topologically, residues 257-382 (WICRKRKREQ…GWVENEIYGY (126 aa)) are cytoplasmic. Residues 266 to 285 (QPDPSTKKQHTIWPSPHQGN) form a disordered region. Ser-286 and Ser-299 each carry phosphoserine. The interaction with NF2 stretch occupies residues 330–374 (DYDNMAVNPSESGFVTLVSVESGFVTNDIYEFSPDQMGRSKESGW). The tract at residues 337–382 (NPSESGFVTLVSVESGFVTNDIYEFSPDQMGRSKESGWVENEIYGY) is interaction with TLN1. 5 tandem repeats follow at residues 340–344 (ESGFV), 350–354 (ESGFV), 356–359 (NDIY), 371–375 (ESGWV), and 377–380 (NEIY). The segment at 340 to 375 (ESGFVTLVSVESGFVTNDIYEFSPDQMGRSKESGWV) is 3 X 5 AA repeats of E-S-G-X-V. Positions 356 to 380 (NDIYEFSPDQMGRSKESGWVENEIY) are 2 X 4 AA repeats of N-X-I-Y.

In terms of assembly, interacts with NF2, RDX and TLN1.

It is found in the membrane. Functionally, receptor for hyaluronate. This Homo sapiens (Human) protein is Layilin (LAYN).